A 340-amino-acid chain; its full sequence is tRNA-dihydrouridine(20/20a) synthase (340 aa).

Residues Pro22–Met24 and Gln75 each bind FMN. Cys105 functions as the Proton donor in the catalytic mechanism. Residues Lys144, His177, Asn217 to Gly219, and Gly239 to Arg240 each bind FMN.

It belongs to the Dus family. DusA subfamily. The cofactor is FMN.

The catalysed reaction is 5,6-dihydrouridine(20) in tRNA + NADP(+) = uridine(20) in tRNA + NADPH + H(+). The enzyme catalyses 5,6-dihydrouridine(20) in tRNA + NAD(+) = uridine(20) in tRNA + NADH + H(+). It carries out the reaction 5,6-dihydrouridine(20a) in tRNA + NADP(+) = uridine(20a) in tRNA + NADPH + H(+). It catalyses the reaction 5,6-dihydrouridine(20a) in tRNA + NAD(+) = uridine(20a) in tRNA + NADH + H(+). In terms of biological role, catalyzes the synthesis of 5,6-dihydrouridine (D), a modified base found in the D-loop of most tRNAs, via the reduction of the C5-C6 double bond in target uridines. Specifically modifies U20 and U20a in tRNAs. The chain is tRNA-dihydrouridine(20/20a) synthase from Xylella fastidiosa (strain 9a5c).